The chain runs to 664 residues: MEVEKKIRGLREELQQHNYNYYVLDKPQISDYEFDIKLKELQELEEKYPEFEDDNSPTRRVGGAVTKNFETVVHENRMYSLSNSYSKEELEEWEARLKKIVEGKIQYVCELKYDGASISLTYENGILKRAVTRGDGFQGDDVTNNIKTIRSVPLKLKDEFPHKFDIRGEIVLPYEGFAKMNAERVEMGEEPYANPRNTASGSLKLQDSAEVARRPLECLLYSITGENTGVASQFEGLEKARKWGFKVPAESELKDSIEEVLHYINYWDEHRHDLPYETDGVVVKVNNFHQQEELGHTAKSPRWAIAYKFKAEQESTKLNKITYQVGRTGAITPVANLDAVQLAGTVVRRASLHNADQIEKLDVREGDTVFVEKGGEIIPKIVGVDFTKRDPDSNPTQYATNCPECDSELIRKDGEAQHYCPNVNGCPPQIIGRIQHYISRKAMDIEGLGGETVALLVNADLIESYADLYKLQKEEVLPLERMAEKSAENLINGIERSKEIPFERVLFALGIRYVGETVAKKLAKHFKSIEALMAASEEELVNIDEIGERIAWSVVEFFNIEANRENVERLKEYGIQLEISAEKLANQTNILEGNTFVISGVFEKVSRNDLKKMIEDNGGKLSSSISSKTNYLVAGDNMGPSKLAKAEKLGTSIISEEDFLKMLE.

Residues 31–35 (DYEFD), 80–81 (SL), and Glu-110 each bind NAD(+). Residue Lys-112 is the N6-AMP-lysine intermediate of the active site. The NAD(+) site is built by Arg-133 and Glu-169. The 21-residue stretch at 237–257 (LEKARKWGFKVPAESELKDSI) folds into the BRCT 1 domain. Residues Lys-284 and Lys-308 each coordinate NAD(+). Positions 402, 405, 420, and 426 each coordinate Zn(2+). Residues 586–664 (NQTNILEGNT…SEEDFLKMLE (79 aa)) form the BRCT 2 domain.

The protein belongs to the NAD-dependent DNA ligase family. LigA subfamily. The cofactor is Mg(2+). It depends on Mn(2+) as a cofactor.

It catalyses the reaction NAD(+) + (deoxyribonucleotide)n-3'-hydroxyl + 5'-phospho-(deoxyribonucleotide)m = (deoxyribonucleotide)n+m + AMP + beta-nicotinamide D-nucleotide.. In terms of biological role, DNA ligase that catalyzes the formation of phosphodiester linkages between 5'-phosphoryl and 3'-hydroxyl groups in double-stranded DNA using NAD as a coenzyme and as the energy source for the reaction. It is essential for DNA replication and repair of damaged DNA. This Christiangramia forsetii (strain DSM 17595 / CGMCC 1.15422 / KT0803) (Gramella forsetii) protein is DNA ligase.